The sequence spans 28 residues: leu operon leader peptide (28 aa).

In terms of biological role, involved in control of the biosynthesis of leucine. The protein is leu operon leader peptide (leuL) of Shigella flexneri.